Reading from the N-terminus, the 271-residue chain is Mannosyl-3-phosphoglycerate phosphatase (271 aa).

Aspartate 13 (nucleophile) is an active-site residue. The Mg(2+) site is built by aspartate 13, aspartate 15, and aspartate 214.

This sequence belongs to the HAD-like hydrolase superfamily. MPGP family. Mg(2+) is required as a cofactor.

It localises to the cytoplasm. It carries out the reaction 2-O-(alpha-D-mannosyl)-3-phosphoglycerate + H2O = (2R)-2-O-(alpha-D-mannosyl)-glycerate + phosphate. This is Mannosyl-3-phosphoglycerate phosphatase (yedP) from Shigella sonnei (strain Ss046).